The sequence spans 25 residues: Zinc metalloproteinase-disintegrin-like daborhagin-M (25 aa).

One can recognise a Peptidase M12B domain in the interval 14–25 (SYVELIITVDHS). Glu17 provides a ligand contact to Ca(2+).

The protein belongs to the venom metalloproteinase (M12B) family. P-III subfamily. P-IIIa sub-subfamily. Monomer. The cofactor is Zn(2+). Post-translationally, N-glycosylated. Contains 16 disulfide bonds. Expressed by the venom gland.

It is found in the secreted. Inhibited by EDTA, EGTA and 1,10-phenanthroline. Addition of Mg(2+) or Ca(2+) increases the casein hydrolysis rate. Snake venom zinc metalloprotease that possesses high hemorrhagic activity (minimum hemorrhagic dose, MHD=0.86 ug) when subcutaneously injected into mice. Has potent fibrinogenolytic activity on alpha-chain of fibrinogen (FGA). Hydrolyzes model substrate (beta-chain of insulin) at Ala(14)-Leu(15) and Tyr(16)-Leu(17) followed by His(10)-Leu(11) and Phe(24)-Phe(25). This chain is Zinc metalloproteinase-disintegrin-like daborhagin-M, found in Daboia siamensis (Eastern Russel's viper).